The following is a 528-amino-acid chain: Protein MGF 505-7R (528 aa).

ANK repeat units follow at residues 54–83 (SINDALLLAGEEGDTDVVQLLLLWEGNLHY) and 261–291 (NIHRALSYAVSHNRRKILDYLIRQKNIPPNT).

This sequence belongs to the asfivirus MGF 505 family. In terms of assembly, interacts with host STING1. Interacts with host JAK1; this interaction leads to JAK1 degradation. Interacts with host JAK2; this interaction leads to JAK2 degradation. Interacts with host RELA; this interaction inhibits NF-kappa-B promoter activity.

The protein resides in the host cytoplasm. Plays a role in virus cell tropism, and may be required for efficient virus replication in macrophages. Interferes with host NF-kappa-B promoter activity mediated by TLR8. Mechanistically, inhibits the phosphorylation and subsequent nuclear translocation of host NF-kappa-B RELA subunit downstream of TLR8. Promotes the expression of the autophagy-related protein host ULK1 to degrade host STING and inhibit the interferon response. Also inhibits JAK1- and JAK2-mediated signaling and thus negatively regulates the IFN-gamma signaling. This is Protein MGF 505-7R from African swine fever virus (isolate Tick/Malawi/Lil 20-1/1983) (ASFV).